The primary structure comprises 475 residues: MAASALRGLPVAGGGESSESEDDGWEIGYLDRTSQKLKGLLPIEEKKEKFKKAMTIGDVSLVQELLDSGISVDSTFQYGWTPLMYAASVANAELVRVLLDRGANASFEKDKQSILITACSAHGSEEQILKCVELLLSRNADPNVACRRLMTPIMYAARDGHTQVVALLVAHGAEVNTQDENGYTALTWAARQGHKNIVLKLLELGANKMLQTKDGKMPSEIAKRNKHHEIFNLLSFTLNPLEGKLQQLTKEDTICKILTTDSDREKDHIFSSYTAFGDLEVFLHGLGLEHMTDILKERDITLRHLLTMREDEFTKNGITSKDQQKILAALKELQVEEIQFGELSEETKLEISGDEFLNFLLKLNKQCGHLITAVQNVITELPVNSQKITLEWASPQNFTSVCEELVNNVEDLSEKVCKLKDLIQKLQNERESDPTHIQLREEVSTWNSRILKRTAITICGFGFLLFICKLTFQRK.

The tract at residues 1 to 25 (MAASALRGLPVAGGGESSESEDDGW) is disordered. A phosphoserine mark is found at Ser17, Ser18, and Ser20. ANK repeat units lie at residues 45–74 (EKKE…SVDS), 78–107 (YGWT…NASF), 110–144 (DKQS…DPNV), 148–177 (RLMT…EVNT), 181–210 (NGYT…NKML), and 214–243 (DGKM…PLEG). In terms of domain architecture, SAM spans 272–334 (SYTAFGDLEV…KILAALKELQ (63 aa)).

In terms of assembly, interacts with DDX4, PIWIL1, RANBP9 and TDRD1.

It localises to the cytoplasm. Its function is as follows. Plays a central role during spermatogenesis by repressing transposable elements and preventing their mobilization, which is essential for the germline integrity. Acts via the piRNA metabolic process, which mediates the repression of transposable elements during meiosis by forming complexes composed of piRNAs and Piwi proteins and governs the methylation and subsequent repression of transposons. Its association with pi-bodies suggests a participation in the primary piRNAs metabolic process. Required prior to the pachytene stage to facilitate the production of multiple types of piRNAs, including those associated with repeats involved in the regulation of retrotransposons. May act by mediating protein-protein interactions during germ cell maturation. The protein is Ankyrin repeat, SAM and basic leucine zipper domain-containing protein 1 (ASZ1) of Pan troglodytes (Chimpanzee).